We begin with the raw amino-acid sequence, 384 residues long: Epoxyqueuosine reductase (384 aa).

The active-site Proton donor is the aspartate 144. The region spanning 186 to 218 is the 4Fe-4S ferredoxin-type domain; that stretch reads LPLPVDQPVEEGCGKCVACMTICPTGAIVEPYT. Residues cysteine 198, cysteine 201, cysteine 204, cysteine 208, cysteine 224, cysteine 251, cysteine 254, and cysteine 258 each contribute to the [4Fe-4S] cluster site.

Belongs to the QueG family. As to quaternary structure, monomer. The cofactor is cob(II)alamin. [4Fe-4S] cluster serves as cofactor.

The protein localises to the cytoplasm. The catalysed reaction is epoxyqueuosine(34) in tRNA + AH2 = queuosine(34) in tRNA + A + H2O. Its pathway is tRNA modification; tRNA-queuosine biosynthesis. In terms of biological role, catalyzes the conversion of epoxyqueuosine (oQ) to queuosine (Q), which is a hypermodified base found in the wobble positions of tRNA(Asp), tRNA(Asn), tRNA(His) and tRNA(Tyr). This chain is Epoxyqueuosine reductase, found in Salmonella typhimurium (strain LT2 / SGSC1412 / ATCC 700720).